A 213-amino-acid polypeptide reads, in one-letter code: Putative nascent polypeptide-associated complex subunit alpha-like protein (213 aa).

The interval 1–46 (MPGEATETVPAIEQQLLQPQAETGSGTESDSDESVPELEEQDSTQV) is disordered. The segment covering 15–28 (QLLQPQAETGSGTE) has biased composition (polar residues). Over residues 29 to 42 (SDSDESVPELEEQD) the composition is skewed to acidic residues. Phosphoserine is present on residues S43 and S131. The NAC-A/B domain occupies 69–134 (RRSEKKARKA…AKIEDLSQEA (66 aa)). An N6-acetyllysine; alternate modification is found at K141. K141 participates in a covalent cross-link: Glycyl lysine isopeptide (Lys-Gly) (interchain with G-Cter in SUMO2); alternate. T160 carries the phosphothreonine modification. Phosphoserine occurs at positions 165, 185, and 201. Residues 175-211 (VEIKDIELVLSQANVWGAKAVRALKNSNDIVNAIMEL) enclose the UBA domain. T212 carries the phosphothreonine modification.

It belongs to the NAC-alpha family.

The sequence is that of Putative nascent polypeptide-associated complex subunit alpha-like protein from Homo sapiens (Human).